Here is a 179-residue protein sequence, read N- to C-terminus: Inner membrane-spanning protein YciB (179 aa).

5 helical membrane-spanning segments follow: residues 22–42 (IYAATAALIVATAIVLIYSWV), 50–70 (MALITFVLVVVFGGLTLFFHN), 76–96 (WKVTVIYALFAGALLVSQWVM), 121–141 (LAWAVFFILCGLANIYIAFWL), and 149–169 (FKVFGLTALTLIFTLLSGIYI).

The protein belongs to the YciB family.

Its subcellular location is the cell inner membrane. In terms of biological role, plays a role in cell envelope biogenesis, maintenance of cell envelope integrity and membrane homeostasis. The protein is Inner membrane-spanning protein YciB of Shigella boydii serotype 18 (strain CDC 3083-94 / BS512).